Here is a 430-residue protein sequence, read N- to C-terminus: Dihydrolipoyllysine-residue acetyltransferase component of pyruvate dehydrogenase complex (430 aa).

The region spanning 2 to 77 (AFEFRLPDIG…VVGDVIVKID (76 aa)) is the Lipoyl-binding domain. An N6-lipoyllysine modification is found at Lys-43. The disordered stretch occupies residues 80–122 (DAEDMQFKGHDDDSSSKEEPAKEEAPAEQAPVATQTEEVDENR). Residues 84–104 (MQFKGHDDDSSSKEEPAKEEA) show a composition bias toward basic and acidic residues. In terms of domain architecture, Peripheral subunit-binding (PSBD) spans 125-162 (KAMPSVRKYAREKGVNIKAVSGSGKNGRITKEDVDAYL). The tract at residues 164 to 200 (GGAPTASNESADSATNEEVAETPAAPAAVSLEGDFPE) is disordered. The span at 177 to 192 (ATNEEVAETPAAPAAV) shows a compositional bias: low complexity. His-401 is a catalytic residue.

The protein belongs to the 2-oxoacid dehydrogenase family. Forms a 24-polypeptide structural core with octahedral symmetry. It depends on (R)-lipoate as a cofactor.

It catalyses the reaction N(6)-[(R)-dihydrolipoyl]-L-lysyl-[protein] + acetyl-CoA = N(6)-[(R)-S(8)-acetyldihydrolipoyl]-L-lysyl-[protein] + CoA. The pyruvate dehydrogenase complex catalyzes the overall conversion of pyruvate to acetyl-CoA and CO(2). It contains multiple copies of three enzymatic components: pyruvate dehydrogenase (E1), dihydrolipoamide acetyltransferase (E2) and lipoamide dehydrogenase (E3). The polypeptide is Dihydrolipoyllysine-residue acetyltransferase component of pyruvate dehydrogenase complex (pdhC) (Staphylococcus aureus).